A 404-amino-acid polypeptide reads, in one-letter code: G2/mitotic-specific cyclin-B1 (404 aa).

Belongs to the cyclin family. Cyclin AB subfamily. Interacts with the CDK1 protein kinase to form a serine/threonine kinase holoenzyme complex also known as maturation promoting factor (MPF). The cyclin subunit imparts substrate specificity to the complex.

Its function is as follows. Essential for the control of the cell cycle at the G2/M (mitosis) transition. This is G2/mitotic-specific cyclin-B1 (ccnb1) from Oryzias latipes (Japanese rice fish).